The primary structure comprises 406 residues: Tubby-like F-box protein 3 (406 aa).

The 56-residue stretch at 50 to 105 folds into the F-box domain; that stretch reads SCWASMPPELLRDVLMRIEQSEDTWPSRKNVVSCAGVCRNWREIVKEIVRVPELSS.

The protein belongs to the TUB family. Ubiquitous at low levels. Not detected in mature siliques.

Its subcellular location is the cell membrane. It is found in the plastid. The protein localises to the nucleus. It localises to the nucleoplasm. The protein resides in the cytoplasm. In terms of biological role, involved in abiotic stress signaling. Tethered to plasma membrane (PM) and probably bound to phosphatidylinositol 4,5-bisphosphate. Abiotic stresses (drought, salt, H(2)O(2)) trigger phospholipase C mediated PM dislogement and plastidial and nucleocytosolic relocation of TULP3. The protein is Tubby-like F-box protein 3 of Arabidopsis thaliana (Mouse-ear cress).